Here is a 117-residue protein sequence, read N- to C-terminus: Large ribosomal subunit protein uL18 (117 aa).

The protein belongs to the universal ribosomal protein uL18 family. As to quaternary structure, part of the 50S ribosomal subunit; part of the 5S rRNA/L5/L18/L25 subcomplex. Contacts the 5S and 23S rRNAs.

Functionally, this is one of the proteins that bind and probably mediate the attachment of the 5S RNA into the large ribosomal subunit, where it forms part of the central protuberance. The protein is Large ribosomal subunit protein uL18 of Methylobacillus flagellatus (strain ATCC 51484 / DSM 6875 / VKM B-1610 / KT).